The primary structure comprises 546 residues: Chaperonin GroEL (546 aa).

Residues 29–32 (TMGP), lysine 50, 86–90 (DGTTT), glycine 414, and aspartate 492 contribute to the ATP site.

This sequence belongs to the chaperonin (HSP60) family. As to quaternary structure, forms a cylinder of 14 subunits composed of two heptameric rings stacked back-to-back. Interacts with the co-chaperonin GroES.

Its subcellular location is the cytoplasm. It carries out the reaction ATP + H2O + a folded polypeptide = ADP + phosphate + an unfolded polypeptide.. Together with its co-chaperonin GroES, plays an essential role in assisting protein folding. The GroEL-GroES system forms a nano-cage that allows encapsulation of the non-native substrate proteins and provides a physical environment optimized to promote and accelerate protein folding. The polypeptide is Chaperonin GroEL (Helicobacter pylori (strain HPAG1)).